We begin with the raw amino-acid sequence, 333 residues long: Protein pelota homolog (333 aa).

It belongs to the eukaryotic release factor 1 family. Pelota subfamily. As to quaternary structure, monomer. It depends on a divalent metal cation as a cofactor.

It localises to the cytoplasm. Functionally, may function in recognizing stalled ribosomes, interact with stem-loop structures in stalled mRNA molecules, and effect endonucleolytic cleavage of the mRNA. May play a role in the release non-functional ribosomes and degradation of damaged mRNAs. Has endoribonuclease activity. This is Protein pelota homolog from Pyrobaculum arsenaticum (strain DSM 13514 / JCM 11321 / PZ6).